The sequence spans 504 residues: WD repeat-containing protein 55 homolog (504 aa).

Disordered regions lie at residues 1 to 21 (MDRHEHFKAPANEDELDDIDD) and 33 to 132 (QEVL…DDDD). Composition is skewed to acidic residues over residues 12 to 21 (NEDELDDIDD) and 33 to 48 (QEVLNESESDDDEYDL). Over residues 63–74 (SSSNESISSDGS) the composition is skewed to low complexity. Positions 78–89 (NAEDSDSDDSMI) are enriched in acidic residues. 6 WD repeats span residues 156 to 195 (KLEDFITDICFHPDRDIIALATIIGDVHLYEYGNEENKLL), 200 to 239 (VHAKACRDVEFTEDGRSLITCSKDKCVMVTDMETEKLKKL), 243 to 281 (AHDDAINKLHVLDERLFATGDDAGTVKLWDFRTKDAIFE), 284 to 323 (EVEDQITQMLTNEQNKLLLATSADGYLTTYNIGARKLYVQ), 326 to 365 (PYEEELNCMGIYRGSSKLVAGTSKGRLYTYNWGYFGYHCD), and 410 to 449 (QHNMPIESLDINCSGELLASSSHNNDVRFWNVKYFEDFGD). The interval 477-504 (FFADMTKDQDDDDNDGGNDTAAGPSNVT) is disordered.

It belongs to the WD repeat WDR55 family.

This is WD repeat-containing protein 55 homolog from Drosophila virilis (Fruit fly).